Here is a 320-residue protein sequence, read N- to C-terminus: Cytochrome f (320 aa).

Positions 1–35 (MNFFTHKKNNFGSFVTIFSFLVALGVTNLTPAAEA) are cleaved as a signal peptide. Positions 36, 56, 59, and 60 each coordinate heme. Residues 286–306 (IQGLLVFFATVLFAQVLLVLK) form a helical membrane-spanning segment.

This sequence belongs to the cytochrome f family. In terms of assembly, the 4 large subunits of the cytochrome b6-f complex are cytochrome b6, subunit IV (17 kDa polypeptide, petD), cytochrome f and the Rieske protein, while the 4 small subunits are PetG, PetL, PetM and PetN. The complex functions as a dimer. Heme serves as cofactor.

The protein localises to the plastid. Its subcellular location is the chloroplast thylakoid membrane. Component of the cytochrome b6-f complex, which mediates electron transfer between photosystem II (PSII) and photosystem I (PSI), cyclic electron flow around PSI, and state transitions. The sequence is that of Cytochrome f from Tetradesmus obliquus (Green alga).